Reading from the N-terminus, the 447-residue chain is UPF0210 protein LSL_0162 (447 aa).

It belongs to the UPF0210 family. As to quaternary structure, homodimer.

The chain is UPF0210 protein LSL_0162 from Ligilactobacillus salivarius (strain UCC118) (Lactobacillus salivarius).